We begin with the raw amino-acid sequence, 66 residues long: Large ribosomal subunit protein bL31 (66 aa).

Zn(2+)-binding residues include C16, C18, C36, and C39.

The protein belongs to the bacterial ribosomal protein bL31 family. Type A subfamily. As to quaternary structure, part of the 50S ribosomal subunit. Zn(2+) serves as cofactor.

In terms of biological role, binds the 23S rRNA. The polypeptide is Large ribosomal subunit protein bL31 (Campylobacter hominis (strain ATCC BAA-381 / DSM 21671 / CCUG 45161 / LMG 19568 / NCTC 13146 / CH001A)).